The following is a 325-amino-acid chain: Isoaspartyl peptidase/L-asparaginase (325 aa).

Thr193 functions as the Nucleophile in the catalytic mechanism. Substrate is bound by residues 221 to 224 (RIGD) and 243 to 246 (TGKG).

It belongs to the Ntn-hydrolase family. As to quaternary structure, heterotetramer of two alpha and two beta chains arranged as a dimer of alpha/beta heterodimers. Post-translationally, cleaved into an alpha and beta chain by autocatalysis; this activates the enzyme. The N-terminal residue of the beta subunit is responsible for the nucleophile hydrolase activity. As to expression, expressed in ripening seeds and developing nodules.

It catalyses the reaction Cleavage of a beta-linked Asp residue from the N-terminus of a polypeptide.. Degrades proteins damaged by L-isoaspartyl residue formation (also known as beta-Asp residues). Also has L-asparaginase activity, which is used to liberate stored nitrogen during seed development. In Lupinus luteus (European yellow lupine), this protein is Isoaspartyl peptidase/L-asparaginase.